The chain runs to 908 residues: 26S proteasome non-ATPase regulatory subunit 2 (908 aa).

The residue at position 1 (Met-1) is an N-acetylmethionine. The disordered stretch occupies residues 1 to 51 (MEEGGRDKTPVQSQQPSATAPSGADEKSSGKERRDAGEKDKEQELSEEDKQ). Phosphothreonine is present on Thr-9. A compositionally biased stretch (polar residues) spans 10–20 (PVQSQQPSATA). Basic and acidic residues predominate over residues 24 to 51 (ADEKSSGKERRDAGEKDKEQELSEEDKQ). Ser-29 and Ser-147 each carry phosphoserine. Tyr-194 is subject to Phosphotyrosine. Phosphoserine is present on residues Ser-361 and Ser-363. PC repeat units lie at residues 409-442 (SAAASLGMILLWDVDGGLTQIDKYLYSSEDYIKS), 443-479 (GALLACGIVNSGVRNECDPALALLSDYVLHNSNTMRL), 480-514 (GSIFGLGLAYAGSNREDVLTLLLPVMGDSKSSMEV), 517-551 (VTALACGMIAVGSCNGDVTSTILQTIMEKSETELK), and 560-589 (LGLGLNHLGKGEAIEAILAALEVVSEPFRS). Lys-551 is modified (N6-acetyllysine). Positions 623–643 (KEKEEDKDKKEKKDKDKKEAP) are enriched in basic and acidic residues. The segment at 623 to 645 (KEKEEDKDKKEKKDKDKKEAPAD) is disordered. PC repeat units lie at residues 692-723 (LALALISVSNPRLNILDTLSKFSHDADPEVSY) and 742-757 (AAMLRQLAQYHAKDPN). Residues 708–903 (DTLSKFSHDA…LEGFVILRKN (196 aa)) form a required for interaction with UBLCP1 region.

This sequence belongs to the proteasome subunit S2 family. Component of the 19S proteasome regulatory particle complex. The 26S proteasome consists of a 20S core particle (CP) and two 19S regulatory subunits (RP). The regulatory particle is made of a lid composed of 9 subunits, a base containing 6 ATPases and few additional components including PSMD2. Interacts with RPGRIP1L. Interacts with CRY1 in a KDM8-dependent manner. Interacts (via C-terminus) with phosphatase UBLCP1 (via ubiquitin-like domain); the interaction recruits UBLCP1 to the 19S regulatory particle where it dephosphorylates 19S subunit PSMC2/RPT1 which impairs PSMC2 ATPase activity and disrupts 26S proteasome assembly.

Its function is as follows. Component of the 26S proteasome, a multiprotein complex involved in the ATP-dependent degradation of ubiquitinated proteins. This complex plays a key role in the maintenance of protein homeostasis by removing misfolded or damaged proteins, which could impair cellular functions, and by removing proteins whose functions are no longer required. Therefore, the proteasome participates in numerous cellular processes, including cell cycle progression, apoptosis, or DNA damage repair. In terms of biological role, binds to the intracellular domain of tumor necrosis factor type 1 receptor. The binding domain of TRAP1 and TRAP2 resides outside the death domain of TNFR1. The chain is 26S proteasome non-ATPase regulatory subunit 2 (Psmd2) from Rattus norvegicus (Rat).